A 97-amino-acid chain; its full sequence is Small ribosomal subunit protein bS6 (97 aa).

It belongs to the bacterial ribosomal protein bS6 family.

Functionally, binds together with bS18 to 16S ribosomal RNA. The polypeptide is Small ribosomal subunit protein bS6 (Listeria monocytogenes serotype 4b (strain CLIP80459)).